The primary structure comprises 136 residues: Glycine-rich RNA-binding protein 4, mitochondrial (136 aa).

A mitochondrion-targeting transit peptide spans 1–33 (MAFCNKLSGILRQGVSQSSNGPVTSMLGSLRYM). One can recognise an RRM domain in the interval 35–113 (SKLFVGGLSW…RQIRVNLATE (79 aa)). Residue Ser43 is modified to Phosphoserine. Residues 113–136 (ERSSAPRSSFGGGGGYGGGGGGGY) form a disordered region. Gly residues predominate over residues 122–136 (FGGGGGYGGGGGGGY). The glycine-rich (GR) required for cell-to-cell movement stretch occupies residues 123–135 (GGGGGYGGGGGGG).

The protein belongs to the GR-RBP family. Binds to small phloem-mobile single-stranded RNAs (ss-sRNA, e.g. small interfering RNA (siRNA) and microRNA (miRNA)) in the phloeme exudate, including viral-derived sRNA (vsiRNA). In terms of tissue distribution, abundantly expressed in young plants, root tips, and flowers, but weakly in mature leaves and stems, implying highly expression in actively proliferating organs.

It is found in the mitochondrion. The protein localises to the secreted. In terms of biological role, possibly has a role in RNA transcription or processing during stress. Binds sequence non-specifically to RNAs and DNAs. Mediates cell-to-cell trafficking of RNA interference (RNAi) signals (small RNAs (sRNA), e.g. small interfering RNA (siRNA) and microRNA (miRNA)) which regulate growth and development, as well as responses to environmental inputs, including pathogen attack; can compromise zucchini yellow mosaic virus (ZYMV) and tobacco rattle virus (TRV) infections at the early stage. The protein is Glycine-rich RNA-binding protein 4, mitochondrial of Arabidopsis thaliana (Mouse-ear cress).